A 160-amino-acid chain; its full sequence is MSGENANSIGSDVTSLIQPGLEQVMQDEGVQVSLINSVLGWCRVHIINPIKTSKIVQSRAFQITMVVLGIILLIAGLALTFVLQGQLGKNAFLFLIPAVIGLVKLLATSVCMEKPCTPEKWRLCKRLLATTEDILDDGQINQSNTIFTMNSSESTSASAS.

Helical transmembrane passes span 63–83 and 92–112; these read ITMVVLGIILLIAGLALTFVL and FLFLIPAVIGLVKLLATSVCM.

It localises to the membrane. This Chlamydophila psittaci (strain ATCC VR-125 / 6BC) (Chlamydia psittaci) protein is Sulfur-rich protein (srp).